Reading from the N-terminus, the 170-residue chain is Acetyl-CoA decarbonylase/synthase complex subunit epsilon 2 (170 aa).

The protein belongs to the CdhB family. In terms of assembly, heterotetramer of two alpha and two epsilon subunits. The ACDS complex is made up of alpha, epsilon, beta, gamma and delta subunits with a probable stoichiometry of (alpha(2)epsilon(2))(4)-beta(8)-(gamma(1)delta(1))(8).

The protein operates within one-carbon metabolism; methanogenesis from acetate. In terms of biological role, part of a complex that catalyzes the reversible cleavage of acetyl-CoA, allowing growth on acetate as sole source of carbon and energy. The alpha-epsilon subcomponent functions as a carbon monoxide dehydrogenase. The precise role of the epsilon subunit is unclear; it may have a stabilizing role within the alpha(2)epsilon(2) component and/or be involved in electron transfer to FAD during a potential FAD-mediated CO oxidation. The polypeptide is Acetyl-CoA decarbonylase/synthase complex subunit epsilon 2 (cdhB2) (Methanosarcina acetivorans (strain ATCC 35395 / DSM 2834 / JCM 12185 / C2A)).